A 197-amino-acid chain; its full sequence is dITP/XTP pyrophosphatase (197 aa).

Position 10 to 15 (10 to 15 (TKNQGK)) interacts with substrate. Aspartate 70 functions as the Proton acceptor in the catalytic mechanism. Mg(2+) is bound at residue aspartate 70. Substrate is bound by residues serine 71, 151–154 (FGYD), lysine 173, and 178–179 (HR).

The protein belongs to the HAM1 NTPase family. Homodimer. Requires Mg(2+) as cofactor.

It carries out the reaction XTP + H2O = XMP + diphosphate + H(+). The catalysed reaction is dITP + H2O = dIMP + diphosphate + H(+). The enzyme catalyses ITP + H2O = IMP + diphosphate + H(+). In terms of biological role, pyrophosphatase that catalyzes the hydrolysis of nucleoside triphosphates to their monophosphate derivatives, with a high preference for the non-canonical purine nucleotides XTP (xanthosine triphosphate), dITP (deoxyinosine triphosphate) and ITP. Seems to function as a house-cleaning enzyme that removes non-canonical purine nucleotides from the nucleotide pool, thus preventing their incorporation into DNA/RNA and avoiding chromosomal lesions. The chain is dITP/XTP pyrophosphatase from Symbiobacterium thermophilum (strain DSM 24528 / JCM 14929 / IAM 14863 / T).